Reading from the N-terminus, the 225-residue chain is MIITVINGSPRKNGATSKVLTYLYKDIERLIPDVKINYFDLSEVNPSYCIGCLNCYKMGKCINQNDKVEYIHDIITKSDGVIFGSPTYGSSVTGLFKVFTDRAHMMLERLLYRKPCIAVTTYENARGSKAISFIKSMVLDSGGYVCGSLSIKTGFNQNPITEKVESKIQKVSKKFIYCIEEKKNPPVLSQIYNFIAINAVLKPMAFKDIEQYKGIIDRWEEQGII.

[4Fe-4S] cluster is bound by residues cysteine 49, cysteine 52, cysteine 55, and cysteine 61.

It belongs to the SsuE family. Isf subfamily. As to quaternary structure, homodimer. It depends on FMN as a cofactor. [4Fe-4S] cluster serves as cofactor.

Functionally, redox-active protein probably involved in electron transport. This chain is Iron-sulfur flavoprotein CD630_04720, found in Clostridioides difficile (strain 630) (Peptoclostridium difficile).